The chain runs to 148 residues: Large ribosomal subunit protein uL15 (148 aa).

Positions 1 to 47 (MTKLEDLRPTPGSVKPRKRVGRGIGSGHGKTSGRGHKGQKSRGSGKV) are disordered. A compositionally biased stretch (basic residues) spans 31 to 45 (TSGRGHKGQKSRGSG).

Belongs to the universal ribosomal protein uL15 family. In terms of assembly, part of the 50S ribosomal subunit.

In terms of biological role, binds to the 23S rRNA. This is Large ribosomal subunit protein uL15 from Pseudothermotoga lettingae (strain ATCC BAA-301 / DSM 14385 / NBRC 107922 / TMO) (Thermotoga lettingae).